The primary structure comprises 33 residues: Ice-structuring protein GS-5 (33 aa).

The residue at position 1 (Met-1) is a Blocked amino end (Met).

Belongs to the type-I AFP family.

Antifreeze proteins lower the blood freezing point. In Myoxocephalus aenaeus (Grubby sculpin), this protein is Ice-structuring protein GS-5.